A 177-amino-acid polypeptide reads, in one-letter code: Small ribosomal subunit protein uS5 (177 aa).

The S5 DRBM domain maps to 21-84 (LKEKMVSVNR…DEARQRMVRV (64 aa)).

Belongs to the universal ribosomal protein uS5 family. In terms of assembly, part of the 30S ribosomal subunit. Contacts proteins S4 and S8.

With S4 and S12 plays an important role in translational accuracy. Functionally, located at the back of the 30S subunit body where it stabilizes the conformation of the head with respect to the body. The chain is Small ribosomal subunit protein uS5 from Nitrosomonas europaea (strain ATCC 19718 / CIP 103999 / KCTC 2705 / NBRC 14298).